The chain runs to 234 residues: Phosphoglycolate phosphatase (234 aa).

Asp-15 (nucleophile) is an active-site residue. The Mg(2+) site is built by Asp-15, Asp-17, and Asp-177.

It belongs to the HAD-like hydrolase superfamily. CbbY/CbbZ/Gph/YieH family. Monomer. Requires Mg(2+) as cofactor. Chloride serves as cofactor.

It carries out the reaction 2-phosphoglycolate + H2O = glycolate + phosphate. It functions in the pathway organic acid metabolism; glycolate biosynthesis; glycolate from 2-phosphoglycolate: step 1/1. Specifically catalyzes the dephosphorylation of 2-phosphoglycolate. Is involved in the dissimilation of the intracellular 2-phosphoglycolate formed during the DNA repair of 3'-phosphoglycolate ends, a major class of DNA lesions induced by oxidative stress. The protein is Phosphoglycolate phosphatase of Photorhabdus laumondii subsp. laumondii (strain DSM 15139 / CIP 105565 / TT01) (Photorhabdus luminescens subsp. laumondii).